The primary structure comprises 266 residues: Glutamate racemase (266 aa).

Residues 9 to 10 and 41 to 42 each bind substrate; these read DS and YG. Catalysis depends on C72, which acts as the Proton donor/acceptor. 73–74 provides a ligand contact to substrate; that stretch reads NT. C184 serves as the catalytic Proton donor/acceptor. 185 to 186 serves as a coordination point for substrate; the sequence is TH.

It belongs to the aspartate/glutamate racemases family.

It carries out the reaction L-glutamate = D-glutamate. It functions in the pathway cell wall biogenesis; peptidoglycan biosynthesis. In terms of biological role, provides the (R)-glutamate required for cell wall biosynthesis. This Staphylococcus haemolyticus protein is Glutamate racemase.